A 189-amino-acid polypeptide reads, in one-letter code: Glycerol-3-phosphate acyltransferase (189 aa).

The next 5 membrane-spanning stretches (helical) occupy residues 1-21 (MFWL…AIVL), 50-70 (KLAI…VLLA), 77-97 (LHAQ…PLYF), 111-131 (MLMA…LLTF), and 151-171 (LLAW…VMIV).

It belongs to the PlsY family. As to quaternary structure, probably interacts with PlsX.

It localises to the cell inner membrane. The enzyme catalyses an acyl phosphate + sn-glycerol 3-phosphate = a 1-acyl-sn-glycero-3-phosphate + phosphate. The protein operates within lipid metabolism; phospholipid metabolism. Functionally, catalyzes the transfer of an acyl group from acyl-phosphate (acyl-PO(4)) to glycerol-3-phosphate (G3P) to form lysophosphatidic acid (LPA). This enzyme utilizes acyl-phosphate as fatty acyl donor, but not acyl-CoA or acyl-ACP. The protein is Glycerol-3-phosphate acyltransferase of Pseudomonas putida (strain ATCC 47054 / DSM 6125 / CFBP 8728 / NCIMB 11950 / KT2440).